We begin with the raw amino-acid sequence, 650 residues long: Threonine--tRNA ligase, chloroplastic/mitochondrial 2 (650 aa).

Zn(2+) is bound by residues Cys347, His398, and His524.

The protein belongs to the class-II aminoacyl-tRNA synthetase family.

The protein localises to the plastid. Its subcellular location is the chloroplast. It localises to the mitochondrion. It catalyses the reaction tRNA(Thr) + L-threonine + ATP = L-threonyl-tRNA(Thr) + AMP + diphosphate + H(+). This Arabidopsis thaliana (Mouse-ear cress) protein is Threonine--tRNA ligase, chloroplastic/mitochondrial 2.